The sequence spans 836 residues: Protein translocase subunit SecA (836 aa).

Residues glutamine 85, 103-107 (GEGKT), and aspartate 492 each bind ATP. Residues cysteine 820, cysteine 822, cysteine 831, and cysteine 832 each coordinate Zn(2+).

Belongs to the SecA family. As to quaternary structure, monomer and homodimer. Part of the essential Sec protein translocation apparatus which comprises SecA, SecYEG and auxiliary proteins SecDF. Other proteins may also be involved. Requires Zn(2+) as cofactor.

The protein resides in the cell membrane. It is found in the cytoplasm. The catalysed reaction is ATP + H2O + cellular proteinSide 1 = ADP + phosphate + cellular proteinSide 2.. Part of the Sec protein translocase complex. Interacts with the SecYEG preprotein conducting channel. Has a central role in coupling the hydrolysis of ATP to the transfer of proteins into and across the cell membrane, serving as an ATP-driven molecular motor driving the stepwise translocation of polypeptide chains across the membrane. The protein is Protein translocase subunit SecA of Clostridium botulinum (strain Eklund 17B / Type B).